Consider the following 279-residue polypeptide: MKKLTLKAPAKVNYRLDVLRRRPDGYHDLRMIMQRIDLCDEIEICLTDGPGIRVVCGREGVPDGPGNIAWRAADALLALSADKPGIDISITKKIPVAAGLGGGSSDAATVLMGVNELLGLDLPEKRLREIGVTLGADVPFFIFGRTALAEGIGEELTAIDRVPAAWIVVVNPNVPVSTAWVYQNLQLTGEAARVKIPRFFESVAEVCAILSNDLESVTIPRYPVIGEIKRELLAAGALGSLMSGSGPTVFALFEEEDAAVRAAEMMRARSWFAAAVRTI.

The active site involves K11. Residue 95–105 coordinates ATP; that stretch reads PVAAGLGGGSS. The active site involves D137.

Belongs to the GHMP kinase family. IspE subfamily.

The enzyme catalyses 4-CDP-2-C-methyl-D-erythritol + ATP = 4-CDP-2-C-methyl-D-erythritol 2-phosphate + ADP + H(+). It participates in isoprenoid biosynthesis; isopentenyl diphosphate biosynthesis via DXP pathway; isopentenyl diphosphate from 1-deoxy-D-xylulose 5-phosphate: step 3/6. Catalyzes the phosphorylation of the position 2 hydroxy group of 4-diphosphocytidyl-2C-methyl-D-erythritol. The protein is 4-diphosphocytidyl-2-C-methyl-D-erythritol kinase of Geobacter sulfurreducens (strain ATCC 51573 / DSM 12127 / PCA).